Here is a 417-residue protein sequence, read N- to C-terminus: MQTILMAEGSGLDFTGEVPLSDFSKYLLDRVKQLEERNVRLKEEYRKIELEKKSVENKKVQYEREIRKLTSELDRLKTPPLIVGTILDVMANGKMIIKSSTGPKFVVNSSQFINSKEVYPGAKVALNQQSLAVIEVLPTVKDPSVLGMEVVDSPEIDYQSIGGLEAQINELKETVELPLLKPELFQKVGIEPPKGVLLYGPPGTGKTLLAKAVANRTKATFIRIIGSELVQKYIGEGARMVRELFELAKEKSPSIIFIDEIDSIGAKRLDSITSGDREVQRTLVQLLAEMDGFDPRGNVRILAATNRPDILDPALLRPGRFDRMIKVPMPTAEAREQILKIHARKMNLADDVDLRKIALITDESSGADLSAIVMEAGMFAIRNNRDVVDSSDFNAAVAKVMGERNRSMAQESGVMFA.

A coiled-coil region spans residues serine 24–threonine 78. ATP contacts are provided by residues glycine 203–leucine 208 and histidine 342. The tract at residues methionine 415–alanine 417 is docks into pockets in the proteasome alpha-ring to cause gate opening.

Belongs to the AAA ATPase family. In terms of assembly, homohexamer. The hexameric complex has a two-ring architecture resembling a top hat that caps the 20S proteasome core at one or both ends. Upon ATP-binding, the C-terminus of PAN interacts with the alpha-rings of the proteasome core by binding to the intersubunit pockets.

The protein localises to the cytoplasm. Functionally, ATPase which is responsible for recognizing, binding, unfolding and translocation of substrate proteins into the archaeal 20S proteasome core particle. Is essential for opening the gate of the 20S proteasome via an interaction with its C-terminus, thereby allowing substrate entry and access to the site of proteolysis. Thus, the C-termini of the proteasomal ATPase function like a 'key in a lock' to induce gate opening and therefore regulate proteolysis. Unfolding activity requires energy from ATP hydrolysis, whereas ATP binding alone promotes ATPase-20S proteasome association which triggers gate opening, and supports translocation of unfolded substrates. This is Proteasome-activating nucleotidase from Methanocella arvoryzae (strain DSM 22066 / NBRC 105507 / MRE50).